Consider the following 60-residue polypeptide: Large ribosomal subunit protein uL30 (60 aa).

Belongs to the universal ribosomal protein uL30 family. Part of the 50S ribosomal subunit.

In Salinispora arenicola (strain CNS-205), this protein is Large ribosomal subunit protein uL30.